The chain runs to 1530 residues: Synaptonemal complex protein 2 (1530 aa).

Residues 439–461 show a composition bias toward basic and acidic residues; that stretch reads EKSKSPKEFAKPSKYIKNSDKGN. The disordered stretch occupies residues 439–480; that stretch reads EKSKSPKEFAKPSKYIKNSDKGNRNNSQLEKTTPSKRKMSEA. Phosphoserine occurs at positions 457 and 465. Position 471 is a phosphothreonine (threonine 471). Residues serine 494, serine 519, serine 529, and serine 538 each carry the phosphoserine modification. Residues 496–555 form a disordered region; that stretch reads VLFSNTSIPPRRRRIKPPLQMTSSAEKPSVSQTSENRVDNAASLKSRSSEGRHRRDNIDK. Over residues 515–530 the composition is skewed to polar residues; it reads QMTSSAEKPSVSQTSE. Basic and acidic residues predominate over residues 542–555; sequence RSSEGRHRRDNIDK. A Phosphothreonine modification is found at threonine 619. 3 disordered regions span residues 653–676, 693–717, and 755–795; these read QKSSSSISDHNSEGTGKVKYKKEQ, HNQQQNHPKYSGQKNTENAKQSDWP, and DKNP…SKGK. Phosphoserine is present on residues serine 660 and serine 664. Polar residues-rich tracts occupy residues 695 to 713 and 755 to 764; these read QQQNHPKYSGQKNTENAKQ and DKNPSASKNV. Serine 936 carries the post-translational modification Phosphoserine. A Phosphothreonine modification is found at threonine 938. Positions 962-1003 are disordered; that stretch reads QLIDYSRNKNVKNHKSGKSRSSLEKGQPSSKMTPSKNITKKM. Residues 970–979 show a composition bias toward basic residues; that stretch reads KNVKNHKSGK. The span at 988 to 998 shows a compositional bias: polar residues; it reads QPSSKMTPSKN. Serine 1136, serine 1138, serine 1145, serine 1161, and serine 1177 each carry phosphoserine. Position 1189 is a phosphothreonine (threonine 1189). Phosphoserine is present on residues serine 1204, serine 1234, serine 1253, serine 1295, and serine 1297. The residue at position 1339 (threonine 1339) is a Phosphothreonine.

It belongs to the SYCP2 family. Component of the lateral elements of synaptonemal complexes. Heterodimer with SYCP3. Interacts with SMC1A and SMC3. Interacts with TEX11. Phosphorylated.

The protein resides in the nucleus. It is found in the chromosome. Major component of the axial/lateral elements of synaptonemal complexes (SCS) during meiotic prophase. Plays a role in the assembly of synaptonemal complexes. Required for normal meiotic chromosome synapsis during oocyte and spermatocyte development and for normal male and female fertility. Required for insertion of SYCP3 into synaptonemal complexes. May be involved in the organization of chromatin by temporarily binding to DNA scaffold attachment regions. Requires SYCP3, but not SYCP1, in order to be incorporated into the axial/lateral elements. In Homo sapiens (Human), this protein is Synaptonemal complex protein 2 (SYCP2).